The sequence spans 491 residues: Trigger factor (491 aa).

One can recognise a PPIase FKBP-type domain in the interval glycine 169–isoleucine 254. Positions lysine 433–glutamate 491 are disordered. Over residues lysine 452–alanine 461 the composition is skewed to basic residues.

This sequence belongs to the FKBP-type PPIase family. Tig subfamily.

It localises to the cytoplasm. The enzyme catalyses [protein]-peptidylproline (omega=180) = [protein]-peptidylproline (omega=0). Involved in protein export. Acts as a chaperone by maintaining the newly synthesized protein in an open conformation. Functions as a peptidyl-prolyl cis-trans isomerase. The sequence is that of Trigger factor from Sinorhizobium fredii (strain NBRC 101917 / NGR234).